A 391-amino-acid chain; its full sequence is Formate-dependent phosphoribosylglycinamide formyltransferase (391 aa).

Residues 18 to 19 and Glu78 contribute to the N(1)-(5-phospho-beta-D-ribosyl)glycinamide site; that span reads EL. Residues Arg110, Lys151, 156-161, 191-194, and Glu199 contribute to the ATP site; these read SSGKGQ and EEFI. The ATP-grasp domain occupies 115–305; the sequence is DLASKDLKIK…EFELHLRAFL (191 aa). 2 residues coordinate Mg(2+): Glu264 and Glu276. N(1)-(5-phospho-beta-D-ribosyl)glycinamide-binding positions include Asp283, Lys353, and 360-361; that span reads RR.

Belongs to the PurK/PurT family. As to quaternary structure, homodimer.

It carries out the reaction N(1)-(5-phospho-beta-D-ribosyl)glycinamide + formate + ATP = N(2)-formyl-N(1)-(5-phospho-beta-D-ribosyl)glycinamide + ADP + phosphate + H(+). The protein operates within purine metabolism; IMP biosynthesis via de novo pathway; N(2)-formyl-N(1)-(5-phospho-D-ribosyl)glycinamide from N(1)-(5-phospho-D-ribosyl)glycinamide (formate route): step 1/1. Involved in the de novo purine biosynthesis. Catalyzes the transfer of formate to 5-phospho-ribosyl-glycinamide (GAR), producing 5-phospho-ribosyl-N-formylglycinamide (FGAR). Formate is provided by PurU via hydrolysis of 10-formyl-tetrahydrofolate. The polypeptide is Formate-dependent phosphoribosylglycinamide formyltransferase (Prochlorococcus marinus (strain AS9601)).